A 347-amino-acid polypeptide reads, in one-letter code: Holliday junction branch migration complex subunit RuvB (347 aa).

A large ATPase domain (RuvB-L) region spans residues 1–180; the sequence is MTSRVVSPEQ…FGIPCRMNFY (180 aa). Residues Leu-19, Arg-20, Gly-61, Lys-64, Thr-65, Thr-66, 127 to 129, Arg-170, Tyr-180, and Arg-217 each bind ATP; that span reads EDF. Thr-65 is a Mg(2+) binding site. Residues 181-251 form a small ATPAse domain (RuvB-S) region; it reads EPAELEAIVS…VADAALNRLE (71 aa). The interval 254-347 is head domain (RuvB-H); sequence RIGLDAMDRR…LLTRMDEEGE (94 aa). Residues Arg-290, Arg-309, and Arg-314 each coordinate DNA.

Belongs to the RuvB family. In terms of assembly, homohexamer. Forms an RuvA(8)-RuvB(12)-Holliday junction (HJ) complex. HJ DNA is sandwiched between 2 RuvA tetramers; dsDNA enters through RuvA and exits via RuvB. An RuvB hexamer assembles on each DNA strand where it exits the tetramer. Each RuvB hexamer is contacted by two RuvA subunits (via domain III) on 2 adjacent RuvB subunits; this complex drives branch migration. In the full resolvosome a probable DNA-RuvA(4)-RuvB(12)-RuvC(2) complex forms which resolves the HJ.

It is found in the cytoplasm. The catalysed reaction is ATP + H2O = ADP + phosphate + H(+). Functionally, the RuvA-RuvB-RuvC complex processes Holliday junction (HJ) DNA during genetic recombination and DNA repair, while the RuvA-RuvB complex plays an important role in the rescue of blocked DNA replication forks via replication fork reversal (RFR). RuvA specifically binds to HJ cruciform DNA, conferring on it an open structure. The RuvB hexamer acts as an ATP-dependent pump, pulling dsDNA into and through the RuvAB complex. RuvB forms 2 homohexamers on either side of HJ DNA bound by 1 or 2 RuvA tetramers; 4 subunits per hexamer contact DNA at a time. Coordinated motions by a converter formed by DNA-disengaged RuvB subunits stimulates ATP hydrolysis and nucleotide exchange. Immobilization of the converter enables RuvB to convert the ATP-contained energy into a lever motion, pulling 2 nucleotides of DNA out of the RuvA tetramer per ATP hydrolyzed, thus driving DNA branch migration. The RuvB motors rotate together with the DNA substrate, which together with the progressing nucleotide cycle form the mechanistic basis for DNA recombination by continuous HJ branch migration. Branch migration allows RuvC to scan DNA until it finds its consensus sequence, where it cleaves and resolves cruciform DNA. The chain is Holliday junction branch migration complex subunit RuvB from Paramagnetospirillum magneticum (strain ATCC 700264 / AMB-1) (Magnetospirillum magneticum).